We begin with the raw amino-acid sequence, 239 residues long: Purine nucleoside phosphorylase DeoD-type (239 aa).

His5 contacts a purine D-ribonucleoside. Residues Gly21, Arg25, Arg44, and 88–91 each bind phosphate; that span reads RVGS. Residues 180 to 182 and 204 to 205 each bind a purine D-ribonucleoside; these read EME and SD. Asp205 functions as the Proton donor in the catalytic mechanism.

Belongs to the PNP/UDP phosphorylase family. In terms of assembly, homohexamer; trimer of homodimers.

The enzyme catalyses a purine D-ribonucleoside + phosphate = a purine nucleobase + alpha-D-ribose 1-phosphate. It carries out the reaction a purine 2'-deoxy-D-ribonucleoside + phosphate = a purine nucleobase + 2-deoxy-alpha-D-ribose 1-phosphate. Functionally, catalyzes the reversible phosphorolytic breakdown of the N-glycosidic bond in the beta-(deoxy)ribonucleoside molecules, with the formation of the corresponding free purine bases and pentose-1-phosphate. This is Purine nucleoside phosphorylase DeoD-type from Pectobacterium atrosepticum (strain SCRI 1043 / ATCC BAA-672) (Erwinia carotovora subsp. atroseptica).